The primary structure comprises 285 residues: Vesicle-associated membrane protein 725 (285 aa).

At 1 to 261 (MDRSVVPISL…MWFENMKIKL (261 aa)) the chain is on the cytoplasmic side. Residues 75 to 179 (FVARGTVILV…SLNREFGSKL (105 aa)) form the Longin domain. Positions 195 to 255 (KLAKVKAQVT…TKIRRKMWFE (61 aa)) constitute a v-SNARE coiled-coil homology domain. A helical; Anchor for type IV membrane protein membrane pass occupies residues 262 to 282 (IVLGIIITLILIIILSVCGGF). At 283–285 (KCT) the chain is on the vesicular side.

Belongs to the synaptobrevin family. As to expression, expressed in flowers, leaves, stems and roots.

The protein localises to the cell membrane. It localises to the early endosome membrane. In terms of biological role, involved in the targeting and/or fusion of transport vesicles to their target membrane. This Arabidopsis thaliana (Mouse-ear cress) protein is Vesicle-associated membrane protein 725.